Here is a 423-residue protein sequence, read N- to C-terminus: MASALEQFVNSVRQLSAQGQMTQLCELINKSGELLAKNLSHLDTVLGALDVQEHSLGVLAVLFVKFSMPSVPDFETLFSQVQLFISTCNGEHIRYATDTFAGLCHQLTNALVERKQPLRGIGILKQAIDKMQMNTNQLTSVHADLCQLCLLAKCFKPALPYLDVDMMDICKENGAYDAKHFLCYYYYGGMIYTGLKNFERALYFYEQAITTPAMAVSHIMLESYKKYILVSLILLGKVQQLPKYTSQIVGRFIKPLSNAYHELAQVYSTNNPSELRNLVNKHSETFTRDNNMGLVKQCLSSLYKKNIQRLTKTFLTLSLQDMASRVQLSGPQEAEKYVLHMIEDGEIFASINQKDGMVSFHDNPEKYNNPAMLHNIDQEMLKCIELDERLKAMDQEITVNPQFVQKSMGSQEDDSGNKPSSYS.

Residue Ala2 is modified to N-acetylalanine. In terms of domain architecture, PCI spans 197 to 365 (NFERALYFYE…GMVSFHDNPE (169 aa)). Residues 402-423 (QFVQKSMGSQEDDSGNKPSSYS) form a disordered region. Ser407, Ser410, and Ser423 each carry phosphoserine.

Belongs to the CSN3 family. In terms of assembly, component of the CSN complex, composed of COPS1/GPS1, COPS2, COPS3, COPS4, COPS5, COPS6, COPS7 (COPS7A or COPS7B), COPS8 and COPS9. In the complex, it probably interacts directly with COPS1, COPS4, COPS8 and COPS9. Interacts with CK2 and PKD. Interacts with the translation initiation factor EIF3S6 and IKBKG. Interacts with ERCC6.

It localises to the cytoplasm. Its subcellular location is the nucleus. Functionally, component of the COP9 signalosome complex (CSN), a complex involved in various cellular and developmental processes. The CSN complex is an essential regulator of the ubiquitin (Ubl) conjugation pathway by mediating the deneddylation of the cullin subunits of SCF-type E3 ligase complexes, leading to decrease the Ubl ligase activity of SCF-type complexes such as SCF, CSA or DDB2. The complex is also involved in phosphorylation of p53/TP53, c-jun/JUN, IkappaBalpha/NFKBIA, ITPK1 and IRF8/ICSBP, possibly via its association with CK2 and PKD kinases. CSN-dependent phosphorylation of TP53 and JUN promotes and protects degradation by the Ubl system, respectively. Essential to maintain the survival of epiblast cells and thus the development of the postimplantation embryo. In Rattus norvegicus (Rat), this protein is COP9 signalosome complex subunit 3 (Cops3).